A 303-amino-acid chain; its full sequence is Secreted mono- and diacylglycerol lipase LIP4 (303 aa).

A signal peptide spans 1 to 16 (MHFLAFLLCLIPLALC). Cys54 and Cys293 form a disulfide bridge. Ser167 (nucleophile) is an active-site residue. Asp224 is an active-site residue.

The protein belongs to the AB hydrolase superfamily. Lipase family. Class 3 subfamily.

Its subcellular location is the secreted. It catalyses the reaction a monoacylglycerol + H2O = glycerol + a fatty acid + H(+). The enzyme catalyses a diacylglycerol + H2O = a monoacylglycerol + a fatty acid + H(+). Functionally, secreted lipase involved in Dandruff and seborrheic dermatitis (D/SD) probably via lipase-mediated breakdown of sebaceous lipids and release of irritating free fatty acids. Shows activity against monoglyceride and diglyceride substrates. Due to an absence of fatty acid synthase genes in Malassezia species, secretory lipases are essential for the yeast to generate free fatty acids from degradation of sebum and assimilate them as lipid sources for growth. Plays an essential role at the pathogen-host interface during disease progression. This chain is Secreted mono- and diacylglycerol lipase LIP4, found in Malassezia restricta (strain ATCC 96810 / NBRC 103918 / CBS 7877) (Seborrheic dermatitis infection agent).